A 638-amino-acid chain; its full sequence is Threonine--tRNA ligase (638 aa).

One can recognise a TGS domain in the interval 1–61 (MPNIKLPDGS…ERDSELAILT (61 aa)). Residues 242–533 (DHRKLGRQLD…LIEHYAGAMP (292 aa)) form a catalytic region. 3 residues coordinate Zn(2+): Cys-333, His-384, and His-510.

This sequence belongs to the class-II aminoacyl-tRNA synthetase family. As to quaternary structure, homodimer. Zn(2+) is required as a cofactor.

The protein localises to the cytoplasm. It catalyses the reaction tRNA(Thr) + L-threonine + ATP = L-threonyl-tRNA(Thr) + AMP + diphosphate + H(+). Catalyzes the attachment of threonine to tRNA(Thr) in a two-step reaction: L-threonine is first activated by ATP to form Thr-AMP and then transferred to the acceptor end of tRNA(Thr). Also edits incorrectly charged L-seryl-tRNA(Thr). The polypeptide is Threonine--tRNA ligase (Azoarcus sp. (strain BH72)).